Consider the following 480-residue polypeptide: Aspartyl/glutamyl-tRNA(Asn/Gln) amidotransferase subunit B (480 aa).

Belongs to the GatB/GatE family. GatB subfamily. In terms of assembly, heterotrimer of A, B and C subunits.

The catalysed reaction is L-glutamyl-tRNA(Gln) + L-glutamine + ATP + H2O = L-glutaminyl-tRNA(Gln) + L-glutamate + ADP + phosphate + H(+). The enzyme catalyses L-aspartyl-tRNA(Asn) + L-glutamine + ATP + H2O = L-asparaginyl-tRNA(Asn) + L-glutamate + ADP + phosphate + 2 H(+). Its function is as follows. Allows the formation of correctly charged Asn-tRNA(Asn) or Gln-tRNA(Gln) through the transamidation of misacylated Asp-tRNA(Asn) or Glu-tRNA(Gln) in organisms which lack either or both of asparaginyl-tRNA or glutaminyl-tRNA synthetases. The reaction takes place in the presence of glutamine and ATP through an activated phospho-Asp-tRNA(Asn) or phospho-Glu-tRNA(Gln). The polypeptide is Aspartyl/glutamyl-tRNA(Asn/Gln) amidotransferase subunit B (Streptococcus pneumoniae serotype 19F (strain G54)).